We begin with the raw amino-acid sequence, 276 residues long: Thiazole synthase (276 aa).

The active-site Schiff-base intermediate with DXP is the K117. Residues G178, 204-205 (AG), and 226-227 (NT) contribute to the 1-deoxy-D-xylulose 5-phosphate site.

The protein belongs to the ThiG family. As to quaternary structure, homotetramer. Forms heterodimers with either ThiH or ThiS.

It localises to the plastid. Its subcellular location is the chloroplast. The catalysed reaction is [ThiS sulfur-carrier protein]-C-terminal-Gly-aminoethanethioate + 2-iminoacetate + 1-deoxy-D-xylulose 5-phosphate = [ThiS sulfur-carrier protein]-C-terminal Gly-Gly + 2-[(2R,5Z)-2-carboxy-4-methylthiazol-5(2H)-ylidene]ethyl phosphate + 2 H2O + H(+). It participates in cofactor biosynthesis; thiamine diphosphate biosynthesis. Catalyzes the rearrangement of 1-deoxy-D-xylulose 5-phosphate (DXP) to produce the thiazole phosphate moiety of thiamine. Sulfur is provided by the thiocarboxylate moiety of the carrier protein ThiS. In vitro, sulfur can be provided by H(2)S. In Gracilaria tenuistipitata var. liui (Red alga), this protein is Thiazole synthase.